The sequence spans 366 residues: DNA integrity scanning protein DisA (366 aa).

One can recognise a DAC domain in the interval 21-159 (VHTLKGTLQR…EGKAHMLEQP (139 aa)). Residues Gly-88, Leu-106, and 119–123 (TRHRS) each bind ATP.

The protein belongs to the DisA family. In terms of assembly, homooctamer. Mg(2+) serves as cofactor.

The catalysed reaction is 2 ATP = 3',3'-c-di-AMP + 2 diphosphate. Functionally, participates in a DNA-damage check-point. DisA forms globular foci that rapidly scan along the chromosomes searching for lesions. Also has diadenylate cyclase activity, catalyzing the condensation of 2 ATP molecules into cyclic di-AMP (c-di-AMP). c-di-AMP likely acts as a signaling molecule that may couple DNA integrity with a cellular process. The protein is DNA integrity scanning protein DisA of Corynebacterium glutamicum (strain R).